The chain runs to 520 residues: MKEAVKNVKPKVPAKKRIITGSKTKKKVFVKKKPPDKKPLKKPVKKTVKTYKLKSIYVSNKDLKMSKWIPTPKKEFTEIETNSWYEHRKFENPNGSPIQSYNKIVPVVPPESIKQQNLANKRKKTNRPIVFISSEKIRIYPTKEQQKILQTWFRLFACMYNSSIDYINSKKVVLESGRINVAATRKVCNKISVRKALKTIRDNLIKSTNPSIMTHIMDEAIGLACSNYKTCLTNYIEGQIKKFDIKPWSISKRRKIIVIEPGYFKGNSFCPTVFPKMKSSKPLIMIDKTVTLQYDSDTRKYILFVPRVTPKYSVNKEKNSCGIDPGLRDFLTVYSENETQSICPIEIVVNTTKNEYKKIDKINEIIKTKPNLNSKRKKKLNRGLRKYHRRVTNKMKDMHYKVSHELVNTFDKICIGKLNVKSILSKANTVLKSALKRKLATLSFYRFTQRLTHMGYKYGTEVVNVNEYLTTKTCSNCGKIKDLGASKIYECESCGMYADRDENAAKNILKVGLKPWYKQK.

Residues 23 to 44 (KTKKKVFVKKKPPDKKPLKKPV) form a disordered region. 4 residues coordinate Zn(2+): cysteine 474, cysteine 477, cysteine 491, and cysteine 494.

In the central section; belongs to the transposase 2 family. It in the C-terminal section; belongs to the transposase 35 family.

In Acanthamoeba polyphaga mimivirus (APMV), this protein is TnpB-like protein L770.